A 74-amino-acid polypeptide reads, in one-letter code: Protein SlyX homolog (74 aa).

Belongs to the SlyX family.

This chain is Protein SlyX homolog, found in Neisseria meningitidis serogroup A / serotype 4A (strain DSM 15465 / Z2491).